The chain runs to 304 residues: Acetylglutamate kinase (304 aa).

Substrate is bound by residues 75-76, arginine 97, and asparagine 202; that span reads GG.

This sequence belongs to the acetylglutamate kinase family. ArgB subfamily.

It is found in the cytoplasm. It catalyses the reaction N-acetyl-L-glutamate + ATP = N-acetyl-L-glutamyl 5-phosphate + ADP. It participates in amino-acid biosynthesis; L-arginine biosynthesis; N(2)-acetyl-L-ornithine from L-glutamate: step 2/4. In terms of biological role, catalyzes the ATP-dependent phosphorylation of N-acetyl-L-glutamate. This chain is Acetylglutamate kinase, found in Parvibaculum lavamentivorans (strain DS-1 / DSM 13023 / NCIMB 13966).